The following is a 256-amino-acid chain: Mannose-specific lectin 1 (256 aa).

Positions 1–23 are cleaved as a signal peptide; the sequence is MAKLLLFLLPAILGLLVPRSAVA. 2 Bulb-type lectin domains span residues 26–131 and 145–252; these read TNYL…PWVR and NNLL…SKRS. Beta-D-mannose is bound by residues 51–55, Tyr59, Trp63, Gln64, 170–174, Tyr178, and 182–185; these read QDDCN, QGDCN, and YGWQ. Positions 51–59 match the Carbohydrate-binding motif 1 motif; sequence QDDCNLVLY. Intrachain disulfides connect Cys54–Cys74 and Cys173–Cys195. The Carbohydrate-binding motif 2 signature appears at 170-178; that stretch reads QGDCNLVLY.

In terms of assembly, forms heterodimers.

It is found in the secreted. Functionally, mannose-specific lectin. Shows agglutinating activity towards erythrocytes from rabbit. The sequence is that of Mannose-specific lectin 1 from Remusatia vivipara (Hitchhiker elephant ear).